The chain runs to 114 residues: T cell receptor alpha variable 24 (114 aa).

The first 22 residues, 1–22 (MEKNPLAAPLLILWFHLDCVSS), serve as a signal peptide directing secretion. The region spanning 23 to 114 (ILNVEQSPQS…EDSATYLCAF (92 aa)) is the Ig-like domain. Asn-42 carries an N-linked (GlcNAc...) asparagine glycan. Cysteines 45 and 112 form a disulfide.

In terms of assembly, alpha-beta TR is a heterodimer composed of an alpha and beta chain; disulfide-linked. The alpha-beta TR is associated with the transmembrane signaling CD3 coreceptor proteins to form the TR-CD3 (TcR or TCR). The assembly of alpha-beta TR heterodimers with CD3 occurs in the endoplasmic reticulum where a single alpha-beta TR heterodimer associates with one CD3D-CD3E heterodimer, one CD3G-CD3E heterodimer and one CD247 homodimer forming a stable octameric structure. CD3D-CD3E and CD3G-CD3E heterodimers preferentially associate with TR alpha and TR beta chains, respectively. The association of the CD247 homodimer is the last step of TcR assembly in the endoplasmic reticulum and is required for transport to the cell surface.

Its subcellular location is the cell membrane. Its function is as follows. V region of the variable domain of T cell receptor (TR) alpha chain that participates in the antigen recognition. Alpha-beta T cell receptors are antigen specific receptors which are essential to the immune response and are present on the cell surface of T lymphocytes. Recognize peptide-major histocompatibility (MH) (pMH) complexes that are displayed by antigen presenting cells (APC), a prerequisite for efficient T cell adaptive immunity against pathogens. Binding of alpha-beta TR to pMH complex initiates TR-CD3 clustering on the cell surface and intracellular activation of LCK that phosphorylates the ITAM motifs of CD3G, CD3D, CD3E and CD247 enabling the recruitment of ZAP70. In turn ZAP70 phosphorylates LAT, which recruits numerous signaling molecules to form the LAT signalosome. The LAT signalosome propagates signal branching to three major signaling pathways, the calcium, the mitogen-activated protein kinase (MAPK) kinase and the nuclear factor NF-kappa-B (NF-kB) pathways, leading to the mobilization of transcription factors that are critical for gene expression and essential for T cell growth and differentiation. The T cell repertoire is generated in the thymus, by V-(D)-J rearrangement. This repertoire is then shaped by intrathymic selection events to generate a peripheral T cell pool of self-MH restricted, non-autoaggressive T cells. Post-thymic interaction of alpha-beta TR with the pMH complexes shapes TR structural and functional avidity. This is T cell receptor alpha variable 24 from Homo sapiens (Human).